Reading from the N-terminus, the 285-residue chain is Chlorite dismutase (285 aa).

The signal sequence occupies residues 1–38 (MKVRCVSLVAAGLLTIAGSAIGQPAPAPMPAMAPAAKP). Glu-105 is a binding site for Ca(2+). His-205 contributes to the heme binding site. Arg-218 serves as the catalytic Proton acceptor. Ca(2+) is bound by residues Asp-227 and Thr-266.

Belongs to the chlorite dismutase family. As to quaternary structure, homopentamer. The cofactor is heme b.

The protein resides in the periplasm. The catalysed reaction is chloride + O2 = chlorite. In terms of biological role, catalyzes the heme-dependent decomposition of chlorite to O(2) and chloride with high efficiency and specificity. Used to detoxify chlorite, a by-product of the reduction of perchlorate, a primarily anthropogenic pollutant, in perchlorate-respiring bacteria. This is Chlorite dismutase (cld) from Ideonella dechloratans.